The primary structure comprises 442 residues: Adenylosuccinate synthetase (442 aa).

Residues 16-22 and 44-46 contribute to the GTP site; these read GDEGKGK and GHT. Aspartate 17 acts as the Proton acceptor in catalysis. The Mg(2+) site is built by aspartate 17 and glycine 44. Residues 17 to 20, 42 to 45, threonine 133, arginine 147, glutamine 228, threonine 243, and arginine 307 contribute to the IMP site; these read DEGK and NAGH. The Proton donor role is filled by histidine 45. Residue 303–309 coordinates substrate; it reads AVTGRPR. Residues arginine 309, 335 to 337, and 417 to 419 each bind GTP; these read KLD and STG.

This sequence belongs to the adenylosuccinate synthetase family. Homodimer. Mg(2+) serves as cofactor.

Its subcellular location is the cytoplasm. It catalyses the reaction IMP + L-aspartate + GTP = N(6)-(1,2-dicarboxyethyl)-AMP + GDP + phosphate + 2 H(+). The protein operates within purine metabolism; AMP biosynthesis via de novo pathway; AMP from IMP: step 1/2. In terms of biological role, plays an important role in the de novo pathway of purine nucleotide biosynthesis. Catalyzes the first committed step in the biosynthesis of AMP from IMP. The sequence is that of Adenylosuccinate synthetase from Koribacter versatilis (strain Ellin345).